The following is a 261-amino-acid chain: uncharacterized protein (261 aa).

41 to 48 (GKSGSGKS) contacts ATP.

The protein belongs to the IIV-6 075L family.

This is an uncharacterized protein from Invertebrate iridescent virus 3 (IIV-3).